We begin with the raw amino-acid sequence, 488 residues long: PTS system mannitol-specific EIICB component (488 aa).

Residues 1–26 (MRKKLAKVKVHIQSLDSLLSSMTMPI) are Cytoplasmic-facing. The region spanning 15–362 (LDSLLSSMTM…LSLTRKKQLK (348 aa)) is the PTS EIIC type-2 domain. The chain crosses the membrane as a helical span at residues 27 to 48 (IGIFIAWGLLASFFIPSGWTPD). Topologically, residues 49–52 (KNLA) are extracellular. Residues 53–73 (LMVGIGIQYVIPTIIXFFGGK) form a helical membrane-spanning segment. Residues 74–147 (KIYEIRGGVI…SGFEMLVNNF (74 aa)) are Cytoplasmic-facing. Residues 148–169 (YLGFLGFALIFPSFYLSIYLIG) form a helical membrane-spanning segment. The Extracellular segment spans residues 170 to 178 (YIQLGLKLL). The chain crosses the membrane as a helical span at residues 179–199 (VEIMQQYKLYPIAAIVIEPAK). Topologically, residues 200 to 289 (VLFLNNAINH…VLLKPVLILA (90 aa)) are cytoplasmic. The helical transmembrane segment at 290-309 (TIAVGVVGNGILQIFNAGTI) threads the bilayer. The Extracellular portion of the chain corresponds to 310–331 (APVSPGSVIAGFLQINKTPLDV). The chain crosses the membrane as a helical span at residues 332 to 353 (AGYALALVLSAVTSLLISLLLL). At 354-488 (SLTRKKQLKT…IIEKIKNEKN (135 aa)) the chain is on the cytoplasmic side. A PTS EIIB type-2 domain is found at 397 to 488 (SQVTFVCDAG…IIEKIKNEKN (92 aa)). Catalysis depends on Cys-403, which acts as the Phosphocysteine intermediate; for EIIB activity. Phosphocysteine; by EIIA is present on Cys-403.

In terms of assembly, homodimer.

It localises to the cell membrane. The enzyme catalyses D-mannitol(out) + N(pros)-phospho-L-histidyl-[protein] = D-mannitol 1-phosphate(in) + L-histidyl-[protein]. The phosphoenolpyruvate-dependent sugar phosphotransferase system (sugar PTS), a major carbohydrate active transport system, catalyzes the phosphorylation of incoming sugar substrates concomitantly with their translocation across the cell membrane. The enzyme II CmtAB PTS system is involved in D-mannitol transport. This chain is PTS system mannitol-specific EIICB component (mtlA), found in Mycoplasma pneumoniae (strain ATCC 29342 / M129 / Subtype 1) (Mycoplasmoides pneumoniae).